Consider the following 79-residue polypeptide: Delta-hormotoxin-Cpt1a (79 aa).

A signal peptide spans 1–20; that stretch reads MKTQVLAVFVLCVLFCLAES. Residues 21-31 constitute a propeptide that is removed on maturation; the sequence is RTTLNKRIDIA. 3 cysteine pairs are disulfide-bonded: cysteine 36-cysteine 75, cysteine 38-cysteine 66, and cysteine 56-cysteine 76.

The protein belongs to the sea anemone sodium channel inhibitory toxin family.

It localises to the secreted. It is found in the nematocyst. In neuromuscular preparation of crustaceans, the toxin increased neurotransmitter release, causing repetitive firing of the axons. May affect sodium channels (Nav). The chain is Delta-hormotoxin-Cpt1a from Calliactis parasitica (Sea anemone).